Reading from the N-terminus, the 550-residue chain is Dihydroxy-acid dehydratase (550 aa).

Mg(2+) is bound at residue Asp-81. Cys-122 serves as a coordination point for [2Fe-2S] cluster. The Mg(2+) site is built by Asp-123 and Lys-124. N6-carboxylysine is present on Lys-124. Cys-194 serves as a coordination point for [2Fe-2S] cluster. Glu-442 is a Mg(2+) binding site. The Proton acceptor role is filled by Ser-467.

The protein belongs to the IlvD/Edd family. As to quaternary structure, homodimer. The cofactor is [2Fe-2S] cluster. Mg(2+) serves as cofactor.

The enzyme catalyses (2R)-2,3-dihydroxy-3-methylbutanoate = 3-methyl-2-oxobutanoate + H2O. The catalysed reaction is (2R,3R)-2,3-dihydroxy-3-methylpentanoate = (S)-3-methyl-2-oxopentanoate + H2O. The protein operates within amino-acid biosynthesis; L-isoleucine biosynthesis; L-isoleucine from 2-oxobutanoate: step 3/4. It functions in the pathway amino-acid biosynthesis; L-valine biosynthesis; L-valine from pyruvate: step 3/4. Functionally, functions in the biosynthesis of branched-chain amino acids. Catalyzes the dehydration of (2R,3R)-2,3-dihydroxy-3-methylpentanoate (2,3-dihydroxy-3-methylvalerate) into 2-oxo-3-methylpentanoate (2-oxo-3-methylvalerate) and of (2R)-2,3-dihydroxy-3-methylbutanoate (2,3-dihydroxyisovalerate) into 2-oxo-3-methylbutanoate (2-oxoisovalerate), the penultimate precursor to L-isoleucine and L-valine, respectively. The protein is Dihydroxy-acid dehydratase of Methanoregula boonei (strain DSM 21154 / JCM 14090 / 6A8).